Here is a 402-residue protein sequence, read N- to C-terminus: Cysteine desulfurase NifS (402 aa).

Residues 72-73 (GT), N151, Q179, and 199-201 (CGH) each bind pyridoxal 5'-phosphate. K202 is subject to N6-(pyridoxal phosphate)lysine. Pyridoxal 5'-phosphate is bound at residue T237. C325 acts as the Cysteine persulfide intermediate in catalysis. A [2Fe-2S] cluster-binding site is contributed by C325.

This sequence belongs to the class-V pyridoxal-phosphate-dependent aminotransferase family. NifS/IscS subfamily. Homodimer. Pyridoxal 5'-phosphate is required as a cofactor.

The catalysed reaction is (sulfur carrier)-H + L-cysteine = (sulfur carrier)-SH + L-alanine. Inhibited by equimolar concentrations of p-chloromercuribenzoic acid, iodoacetamide or N-ethylmaleimide. Its function is as follows. Catalyzes the removal of elemental sulfur atoms from cysteine to produce alanine. Seems to participate in the biosynthesis of the nitrogenase metalloclusters by providing the inorganic sulfur required for the Fe-S core formation. The polypeptide is Cysteine desulfurase NifS (Azotobacter vinelandii).